The chain runs to 116 residues: Small ribosomal subunit protein uS11m (116 aa).

It belongs to the universal ribosomal protein uS11 family.

The protein resides in the mitochondrion. The chain is Small ribosomal subunit protein uS11m (RPS11) from Chondrus crispus (Carrageen Irish moss).